The following is a 772-amino-acid chain: NAD(P)H-quinone oxidoreductase subunit 5, chloroplastic (772 aa).

Transmembrane regions (helical) follow at residues tryptophan 9–phenylalanine 29, tryptophan 40–isoleucine 60, isoleucine 89–phenylalanine 109, phenylalanine 125–isoleucine 145, isoleucine 147–threonine 167, glycine 185–phenylalanine 205, asparagine 220–alanine 240, threonine 259–alanine 279, tyrosine 290–alanine 312, leucine 328–isoleucine 348, alanine 355–serine 375, threonine 397–serine 417, tryptophan 426–tyrosine 446, leucine 550–phenylalanine 570, phenylalanine 604–phenylalanine 624, and isoleucine 731–leucine 751.

This sequence belongs to the complex I subunit 5 family. As to quaternary structure, NDH is composed of at least 16 different subunits, 5 of which are encoded in the nucleus.

Its subcellular location is the plastid. The protein resides in the chloroplast thylakoid membrane. The catalysed reaction is a plastoquinone + NADH + (n+1) H(+)(in) = a plastoquinol + NAD(+) + n H(+)(out). It catalyses the reaction a plastoquinone + NADPH + (n+1) H(+)(in) = a plastoquinol + NADP(+) + n H(+)(out). Functionally, NDH shuttles electrons from NAD(P)H:plastoquinone, via FMN and iron-sulfur (Fe-S) centers, to quinones in the photosynthetic chain and possibly in a chloroplast respiratory chain. The immediate electron acceptor for the enzyme in this species is believed to be plastoquinone. Couples the redox reaction to proton translocation, and thus conserves the redox energy in a proton gradient. The sequence is that of NAD(P)H-quinone oxidoreductase subunit 5, chloroplastic (ndhF) from Oenothera argillicola (Appalachian evening primrose).